Reading from the N-terminus, the 241-residue chain is uncharacterized protein (241 aa).

The segment at 19 to 53 is disordered; sequence KRIGYGMGEKSSAGSSRDQTYSVKPASDVKDKKKV. The span at 30–39 shows a compositional bias: polar residues; that stretch reads SAGSSRDQTY.

This is an uncharacterized protein from Ostreid herpesvirus 1 (isolate France) (OsHV-1).